We begin with the raw amino-acid sequence, 276 residues long: 2-dehydro-3-deoxyphosphooctonate aldolase (276 aa).

It belongs to the KdsA family.

The protein localises to the cytoplasm. It catalyses the reaction D-arabinose 5-phosphate + phosphoenolpyruvate + H2O = 3-deoxy-alpha-D-manno-2-octulosonate-8-phosphate + phosphate. It functions in the pathway carbohydrate biosynthesis; 3-deoxy-D-manno-octulosonate biosynthesis; 3-deoxy-D-manno-octulosonate from D-ribulose 5-phosphate: step 2/3. Its pathway is bacterial outer membrane biogenesis; lipopolysaccharide biosynthesis. The sequence is that of 2-dehydro-3-deoxyphosphooctonate aldolase from Xanthomonas axonopodis pv. citri (strain 306).